Consider the following 486-residue polypeptide: Ribosomal protein uS12 methylthiotransferase RimO (486 aa).

Residues 9–125 (RSVALVTLGC…LSSHLEAILH (117 aa)) form the MTTase N-terminal domain. 6 residues coordinate [4Fe-4S] cluster: Cys-18, Cys-54, Cys-88, Cys-191, Cys-195, and Cys-198. The 232-residue stretch at 177–408 (LGSGPWAPVK…RLVEELVTQR (232 aa)) folds into the Radical SAM core domain. Positions 410–482 (EERLGEVVEV…GADLLAEPLV (73 aa)) constitute a TRAM domain.

It belongs to the methylthiotransferase family. RimO subfamily. The cofactor is [4Fe-4S] cluster.

Its subcellular location is the cytoplasm. The catalysed reaction is L-aspartate(89)-[ribosomal protein uS12]-hydrogen + (sulfur carrier)-SH + AH2 + 2 S-adenosyl-L-methionine = 3-methylsulfanyl-L-aspartate(89)-[ribosomal protein uS12]-hydrogen + (sulfur carrier)-H + 5'-deoxyadenosine + L-methionine + A + S-adenosyl-L-homocysteine + 2 H(+). Its function is as follows. Catalyzes the methylthiolation of an aspartic acid residue of ribosomal protein uS12. This Kineococcus radiotolerans (strain ATCC BAA-149 / DSM 14245 / SRS30216) protein is Ribosomal protein uS12 methylthiotransferase RimO.